Consider the following 163-residue polypeptide: Jun dimerization protein 2 (163 aa).

2 disordered regions span residues 1–20 and 58–89; these read MMPGQIPDPSVTTGSLPGLG and GKRPQPVKSELDEEEERRKRRREKNKVAAARC. Residue Lys-65 forms a Glycyl lysine isopeptide (Lys-Gly) (interchain with G-Cter in SUMO2) linkage. In terms of domain architecture, bZIP spans 72–135; sequence EERRKRRREK…QQLILMLNRH (64 aa). Residues 74–96 are basic motif; that stretch reads RRKRRREKNKVAAARCRNKKKER. The tract at residues 100–128 is leucine-zipper; sequence LQRESERLELMNAELKTQIEELKQERQQL. Thr-148 is modified (phosphothreonine; by MAPK8).

This sequence belongs to the bZIP family. ATF subfamily. Forms a homodimer or heterodimer with JUN, JUNB, JUND, CEBPG and ATF2 thereby inhibiting transactivation by JUN, ATF2 and CEBPG. Binds multiple DNA elements such as cAMP-response element (CRE) and TPA response element (TRE) either as homodimer or heterodimer. Interacts with IRF2BP1. In terms of processing, phosphorylation of Thr-148 by MAPK8 in response to different stress conditions such as, UV irradiation, oxidatives stress and anisomycin treatments. Post-translationally, polyubiquitinated; probably by IRF2BP1.

The protein localises to the nucleus. In terms of biological role, component of the AP-1 transcription factor that represses transactivation mediated by the Jun family of proteins. Involved in a variety of transcriptional responses associated with AP-1 such as UV-induced apoptosis, cell differentiation, tumorigenesis and antitumogeneris. Can also function as a repressor by recruiting histone deacetylase 3/HDAC3 to the promoter region of JUN. May control transcription via direct regulation of the modification of histones and the assembly of chromatin. The polypeptide is Jun dimerization protein 2 (JDP2) (Homo sapiens (Human)).